A 145-amino-acid polypeptide reads, in one-letter code: Large-conductance mechanosensitive channel (145 aa).

3 helical membrane-spanning segments follow: residues 14–34 (VMDL…VKSL), 38–58 (LIMP…YFLP), and 81–101 (GSFL…FLMV).

This sequence belongs to the MscL family. Homopentamer.

The protein localises to the cell inner membrane. Channel that opens in response to stretch forces in the membrane lipid bilayer. May participate in the regulation of osmotic pressure changes within the cell. The sequence is that of Large-conductance mechanosensitive channel from Rhizobium leguminosarum bv. trifolii (strain WSM2304).